Reading from the N-terminus, the 453-residue chain is tRNA modification GTPase MnmE (453 aa).

(6S)-5-formyl-5,6,7,8-tetrahydrofolate is bound by residues Arg28, Glu86, and Lys125. Residues 221–375 enclose the TrmE-type G domain; that stretch reads GIKIAIVGEP…LIKYLEETSL (155 aa). K(+) is bound at residue Asn231. Residues 231 to 236, 250 to 256, and 276 to 279 each bind GTP; these read NAGKSS, TNIPGTT, and DTAG. Position 235 (Ser235) interacts with Mg(2+). K(+) is bound by residues Thr250, Ile252, and Thr255. Thr256 provides a ligand contact to Mg(2+). Lys453 provides a ligand contact to (6S)-5-formyl-5,6,7,8-tetrahydrofolate.

This sequence belongs to the TRAFAC class TrmE-Era-EngA-EngB-Septin-like GTPase superfamily. TrmE GTPase family. In terms of assembly, homodimer. Heterotetramer of two MnmE and two MnmG subunits. K(+) is required as a cofactor.

The protein localises to the cytoplasm. Its function is as follows. Exhibits a very high intrinsic GTPase hydrolysis rate. Involved in the addition of a carboxymethylaminomethyl (cmnm) group at the wobble position (U34) of certain tRNAs, forming tRNA-cmnm(5)s(2)U34. The protein is tRNA modification GTPase MnmE of Mycoplasmoides gallisepticum (strain R(low / passage 15 / clone 2)) (Mycoplasma gallisepticum).